The sequence spans 405 residues: MNRTKTVNWKRNLFITWIGCFFVGSSFSLVMPFLPLYIQGLGVSGGNVELYSGLAFSLPALASGLVAPIWGRLADEHGRKVMMVRASIVMTLTMGGIAFAPNVWWLLGLRLLMGFFSGYIPNSTAMIASQAPKDKSGYALGTLATAMVSGTLIGPSLGGLLAEWFGMANVFLIVGALLALATLLTIFFVHENFEPIAKGEMLSSKEIINKVSNKQILFGLLVTTFIIQITSQSIEPFVTLYIKTLTTSTNNLMFISGLIVSAVGLSAMLSSSFLGRLGDKYGSHRLILIGLVFTFIIYLPMAFVQSPLQLGILRFLLGFGTGALTPSVNSLLSKITPKEGVSRIFAYAQMCSNLGMVTGPLVGSAIAGYISYRAAIVGTSLFVIVNIIWSFINFRKYLRKRSIME.

The next 12 membrane-spanning stretches (helical) occupy residues 13-33, 50-70, 88-108, 111-131, 147-167, 170-190, 216-236, 254-274, 286-306, 308-328, 350-370, and 374-394; these read LFIT…VMPF, LYSG…APIW, IVMT…WLLG, LLMG…ASQA, MVSG…WFGM, VFLI…FFVH, ILFG…SIEP, FISG…SSFL, LILI…FVQS, LQLG…TPSV, MCSN…AGYI, and AAIV…FINF.

It belongs to the major facilitator superfamily. TCR/Tet family.

Its subcellular location is the cell membrane. Its function is as follows. Efflux pump for various substrates. The protein is Multi-drug resistance efflux pump PmrA homolog (pmrA) of Lactococcus lactis subsp. lactis (strain IL1403) (Streptococcus lactis).